The following is a 249-amino-acid chain: Tetraspanin-7 (249 aa).

Over 1–16 the chain is Cytoplasmic; sequence MASRRMETKPVITCLK. Residues 17 to 40 form a helical membrane-spanning segment; that stretch reads TLLIIYSFVFWITGVILLAVGVWG. Residues 41–56 lie on the Extracellular side of the membrane; the sequence is KLTLGTYISLIAENST. Residue asparagine 54 is glycosylated (N-linked (GlcNAc...) asparagine). Residues 57-75 traverse the membrane as a helical segment; the sequence is NAPYVLIGTGTTIVVFGLF. Residues 76–86 are Cytoplasmic-facing; sequence GCFATCRGSPW. Residues 87 to 112 traverse the membrane as a helical segment; the sequence is MLKLYAMFLSLVFLAELVAGISGFVF. Over 113 to 213 the chain is Extracellular; the sequence is RHEIKDTFLR…LVTSFMETNM (101 aa). N-linked (GlcNAc...) asparagine glycosylation is found at asparagine 155, asparagine 158, asparagine 177, and asparagine 188. A helical membrane pass occupies residues 214 to 234; that stretch reads GIIAGVAFGIAFSQLIGMLLA. At 235–249 the chain is on the cytoplasmic side; sequence CCLSRFITANQYEMV.

Belongs to the tetraspanin (TM4SF) family.

It localises to the membrane. In terms of biological role, may be involved in cell proliferation and cell motility. The protein is Tetraspanin-7 (Tspan7) of Mus musculus (Mouse).